Here is a 41-residue protein sequence, read N- to C-terminus: uncharacterized protein (41 aa).

Residues 1 to 12 show a composition bias toward basic and acidic residues; it reads MTRNVVRQEFEA. The disordered stretch occupies residues 1-23; that stretch reads MTRNVVRQEFEAPGKPQDSSQQD.

This is an uncharacterized protein from Homo sapiens (Human).